Consider the following 251-residue polypeptide: Ubiquinone/menaquinone biosynthesis C-methyltransferase UbiE (251 aa).

S-adenosyl-L-methionine contacts are provided by residues T74, D95, and 123 to 124 (NA).

The protein belongs to the class I-like SAM-binding methyltransferase superfamily. MenG/UbiE family.

It carries out the reaction a 2-demethylmenaquinol + S-adenosyl-L-methionine = a menaquinol + S-adenosyl-L-homocysteine + H(+). The catalysed reaction is a 2-methoxy-6-(all-trans-polyprenyl)benzene-1,4-diol + S-adenosyl-L-methionine = a 5-methoxy-2-methyl-3-(all-trans-polyprenyl)benzene-1,4-diol + S-adenosyl-L-homocysteine + H(+). Its pathway is quinol/quinone metabolism; menaquinone biosynthesis; menaquinol from 1,4-dihydroxy-2-naphthoate: step 2/2. It functions in the pathway cofactor biosynthesis; ubiquinone biosynthesis. Methyltransferase required for the conversion of demethylmenaquinol (DMKH2) to menaquinol (MKH2) and the conversion of 2-polyprenyl-6-methoxy-1,4-benzoquinol (DDMQH2) to 2-polyprenyl-3-methyl-6-methoxy-1,4-benzoquinol (DMQH2). This is Ubiquinone/menaquinone biosynthesis C-methyltransferase UbiE from Shewanella halifaxensis (strain HAW-EB4).